The chain runs to 393 residues: Pyrimidine monooxygenase RutA (393 aa).

Residues 79-80 (IK), asparagine 145, glutamate 154, 170-171 (RY), and serine 220 contribute to the FMN site.

The protein belongs to the NtaA/SnaA/DszA monooxygenase family. RutA subfamily.

It carries out the reaction uracil + FMNH2 + NADH + O2 = (Z)-3-ureidoacrylate + FMN + NAD(+) + H2O + H(+). The catalysed reaction is thymine + FMNH2 + NADH + O2 = (Z)-2-methylureidoacrylate + FMN + NAD(+) + H2O + H(+). Functionally, catalyzes the pyrimidine ring opening between N-3 and C-4 by an unusual flavin hydroperoxide-catalyzed mechanism, adding oxygen atoms in the process to yield ureidoacrylate peracid, that immediately reacts with FMN forming ureidoacrylate and FMN-N(5)-oxide. The FMN-N(5)-oxide reacts spontaneously with NADH to produce FMN. Requires the flavin reductase RutF to regenerate FMN in vivo. This chain is Pyrimidine monooxygenase RutA, found in Escherichia coli O18:K1:H7 (strain IHE3034 / ExPEC).